The primary structure comprises 176 residues: Tubulin polymerization-promoting protein family member 3 (176 aa).

Position 2 is an N-acetylalanine (A2). The interval 132 to 152 is disordered; sequence TGSHKERFDESGKGKGIAGRQ. Over residues 134–144 the composition is skewed to basic and acidic residues; it reads SHKERFDESGK.

The protein belongs to the TPPP family.

Its subcellular location is the cytoplasm. It is found in the cytoskeleton. Functionally, regulator of microtubule dynamic that has microtubule bundling activity. Required for embryo implantation; possibly by regulating beta-catenin. Also required for decidualization via regulation of beta-catenin. The protein is Tubulin polymerization-promoting protein family member 3 of Mus musculus (Mouse).